A 158-amino-acid chain; its full sequence is Transcription factor HY5 (158 aa).

The segment covering 1-25 (MQEQATSSIAASSLPSSSERSSSSA) has biased composition (low complexity). Residues 1–105 (MQEQATSSIA…NRVSAQQARE (105 aa)) form a disordered region. Residues 26–44 (LHHELKEGMESDDEIRRVP) show a composition bias toward basic and acidic residues. An interaction with COP1 region spans residues 35–46 (ESDDEIRRVPEM). A compositionally biased stretch (low complexity) spans 47–58 (GGEATGTTSASG). Residues 86–149 (ENKRLKRLLR…QMLRHILKNT (64 aa)) form the bZIP domain. The segment at 88–108 (KRLKRLLRNRVSAQQARERKK) is basic motif. A leucine-zipper region spans residues 114-142 (LEARVKELETKNAELEERLSTLQNENQML).

It belongs to the bZIP family. As to quaternary structure, interacts with COP1. Post-translationally, ubiquitinated by COP1. Ubiquitination takes place in darkness and leads to its subsequent degradation, thereby preventing to activate photomorphogenesis signals.

The protein localises to the nucleus. Transcription factor that promotes photomorphogenesis in the light and positively regulates fruit pigmentation and fruit nutritional quality. Probably acts downstream of the light receptor network and directly affects transcription of light-induced genes. The polypeptide is Transcription factor HY5 (HY5) (Solanum lycopersicum (Tomato)).